The primary structure comprises 249 residues: MRLLLTNDDGVNSKGIYTLAKELQKEHEIIIAAPSIEMSAKSHSITIAKPLFIKEVELDDINATTYSISGTPADCVKVAMDKILDKPVDMVISGINYGTNLGIDILYSGTVSAAIEAAIHNIPSIAMSAEVKNGDINFDTAASIARELVKISQENSMKGNLVLNVNVPCLDKDSLKGLKVCQMGGRTFTSYFEKIEKNKEVSYMLKGELTNNHKPTTDIHFLRKGYTTITPLHYDLTNFKIMNDVSNWF.

A divalent metal cation-binding residues include Asp-8, Asp-9, Ser-39, and Asn-96.

It belongs to the SurE nucleotidase family. A divalent metal cation serves as cofactor.

It localises to the cytoplasm. It carries out the reaction a ribonucleoside 5'-phosphate + H2O = a ribonucleoside + phosphate. Functionally, nucleotidase that shows phosphatase activity on nucleoside 5'-monophosphates. The protein is 5'-nucleotidase SurE of Clostridium tetani (strain Massachusetts / E88).